Here is a 335-residue protein sequence, read N- to C-terminus: UPF0353 protein MMAR_2288 (335 aa).

2 helical membrane-spanning segments follow: residues 18–38 and 67–87; these read WFFL…VLQL and IPAM…AGPT. The 197-residue stretch at 98-294 folds into the VWFA domain; that stretch reads VVMLVIDVSQ…AELNSVYASL (197 aa). A helical transmembrane segment spans residues 309–329; the sequence is MGWLRLGALVLVAAALAALLI.

It belongs to the UPF0353 family.

Its subcellular location is the cell membrane. This Mycobacterium marinum (strain ATCC BAA-535 / M) protein is UPF0353 protein MMAR_2288.